Here is a 752-residue protein sequence, read N- to C-terminus: Photosystem I P700 chlorophyll a apoprotein A1 (752 aa).

The next 8 membrane-spanning stretches (helical) occupy residues 73-96 (IFSA…FHGA), 159-182 (LYCT…FHYH), 198-222 (MNHH…HLSL), 294-312 (TAHH…GHMY), 349-372 (WHAQ…HHMY), 388-414 (LSLF…IFMV), 436-458 (AIVS…LYIH), and 533-551 (FMVH…LILV). Residues Cys-575 and Cys-584 each contribute to the [4Fe-4S] cluster site. Helical transmembrane passes span 591–612 (HVFL…HFSW) and 666–688 (LSAY…MFLF). His-677 provides a ligand contact to chlorophyll a'. Chlorophyll a is bound by residues Met-685 and Tyr-693. Trp-694 serves as a coordination point for phylloquinone. A helical membrane pass occupies residues 726–746 (AVGVAHYLLGGIGTTWAFFLA).

It belongs to the PsaA/PsaB family. As to quaternary structure, the PsaA/B heterodimer binds the P700 chlorophyll special pair and subsequent electron acceptors. PSI consists of a core antenna complex that captures photons, and an electron transfer chain that converts photonic excitation into a charge separation. The eukaryotic PSI reaction center is composed of at least 11 subunits. Requires P700 is a chlorophyll a/chlorophyll a' dimer, A0 is one or more chlorophyll a, A1 is one or both phylloquinones and FX is a shared 4Fe-4S iron-sulfur center. as cofactor.

The protein resides in the plastid. It localises to the chloroplast thylakoid membrane. It catalyses the reaction reduced [plastocyanin] + hnu + oxidized [2Fe-2S]-[ferredoxin] = oxidized [plastocyanin] + reduced [2Fe-2S]-[ferredoxin]. Functionally, psaA and PsaB bind P700, the primary electron donor of photosystem I (PSI), as well as the electron acceptors A0, A1 and FX. PSI is a plastocyanin/cytochrome c6-ferredoxin oxidoreductase, converting photonic excitation into a charge separation, which transfers an electron from the donor P700 chlorophyll pair to the spectroscopically characterized acceptors A0, A1, FX, FA and FB in turn. Oxidized P700 is reduced on the lumenal side of the thylakoid membrane by plastocyanin or cytochrome c6. This chain is Photosystem I P700 chlorophyll a apoprotein A1, found in Porphyra purpurea (Red seaweed).